The primary structure comprises 173 residues: Large ribosomal subunit protein uL16 (173 aa).

The protein belongs to the universal ribosomal protein uL16 family.

In Methanosarcina acetivorans (strain ATCC 35395 / DSM 2834 / JCM 12185 / C2A), this protein is Large ribosomal subunit protein uL16.